The primary structure comprises 473 residues: Cannabinoid receptor 1 (473 aa).

At 1–118 (MKSILDGLAD…CFMILNPSQQ (118 aa)) the chain is on the extracellular side. The tract at residues 2–23 (KSILDGLADTTFRTITTDLLYV) is required for mitochondrial localization. N-linked (GlcNAc...) asparagine glycans are attached at residues asparagine 79 and asparagine 85. The helical transmembrane segment at 119–144 (LAIAVLSLTLGTFTVLENLLVLCVIL) threads the bilayer. The Cytoplasmic portion of the chain corresponds to 145 to 156 (HSRSLRCRPSYH). A helical membrane pass occupies residues 157–177 (FIGSLAVADLLGSVIFVYSFV). The Extracellular segment spans residues 178–189 (DFHVFHRKDSPN). Residues 190–214 (VFLFKLGGVTASFTASVGSLFLTAI) form a helical membrane-spanning segment. Over 215 to 234 (DRYISIHRPLAYKRIVTRPK) the chain is Cytoplasmic. The chain crosses the membrane as a helical span at residues 235–257 (AVVAFCVMWTIAIVIAVLPLLGW). The Extracellular segment spans residues 258–275 (NCKKLNSVCSDIFPLIDE). The helical transmembrane segment at 276 to 301 (TYLMFWIGVTSILLLFIVYAYMYILW) threads the bilayer. Residues 302-346 (KAHSHAVRMLQRGTQKSIIIQSTEDGKVQITRPDQTRMDIRLAKT) lie on the Cytoplasmic side of the membrane. The chain crosses the membrane as a helical span at residues 347–367 (LVLILVVLIICWGPLLAIMVY). The Extracellular portion of the chain corresponds to 368–379 (DVFGKMNKLIKT). The chain crosses the membrane as a helical span at residues 380 to 401 (IFAFCSMLCLLNSTVNPIIYAL). Over 402 to 473 (RSKDLRHAFR…VSTDTTAEAL (72 aa)) the chain is Cytoplasmic. Cysteine 417 carries the S-palmitoyl cysteine lipid modification.

This sequence belongs to the G-protein coupled receptor 1 family. In terms of processing, palmitoylation at Cys-417 is important for recruitment at both plasma membrane and lipid rafts and association with G protein alpha subunits.

It is found in the cell membrane. The protein localises to the mitochondrion outer membrane. The protein resides in the cell projection. It localises to the axon. Its subcellular location is the presynapse. In terms of biological role, G-protein coupled receptor for cannabinoids. Mediates many cannabinoid-induced effects in the central nervous system (CNS), as well as in peripheral tissues. Regulates cellular respiration and energy production in response to cannabinoids. Signaling typically involves reduction in cyclic AMP. This Taeniopygia guttata (Zebra finch) protein is Cannabinoid receptor 1 (CNR1).